The chain runs to 457 residues: Bifunctional protein GlmU (457 aa).

Residues 1-229 (MDLAAVILAA…PVEVTGINDR (229 aa)) form a pyrophosphorylase region. Residues 8–11 (LAAG), lysine 22, glutamine 72, and 77–78 (GT) contribute to the UDP-N-acetyl-alpha-D-glucosamine site. A Mg(2+)-binding site is contributed by aspartate 102. The UDP-N-acetyl-alpha-D-glucosamine site is built by glycine 139, glutamate 154, asparagine 169, and asparagine 227. Residue asparagine 227 coordinates Mg(2+). The tract at residues 230–250 (RQLAEVEKYLRRRVLEDLMQS) is linker. The tract at residues 251–457 (GVTVLDPAST…WAAKKRDKKV (207 aa)) is N-acetyltransferase. Arginine 332 and lysine 350 together coordinate UDP-N-acetyl-alpha-D-glucosamine. Histidine 362 acts as the Proton acceptor in catalysis. 2 residues coordinate UDP-N-acetyl-alpha-D-glucosamine: tyrosine 365 and asparagine 376. Acetyl-CoA-binding positions include 385 to 386 (NY), serine 404, alanine 422, and arginine 439.

This sequence in the N-terminal section; belongs to the N-acetylglucosamine-1-phosphate uridyltransferase family. In the C-terminal section; belongs to the transferase hexapeptide repeat family. As to quaternary structure, homotrimer. Mg(2+) serves as cofactor.

It localises to the cytoplasm. It catalyses the reaction alpha-D-glucosamine 1-phosphate + acetyl-CoA = N-acetyl-alpha-D-glucosamine 1-phosphate + CoA + H(+). The enzyme catalyses N-acetyl-alpha-D-glucosamine 1-phosphate + UTP + H(+) = UDP-N-acetyl-alpha-D-glucosamine + diphosphate. The protein operates within nucleotide-sugar biosynthesis; UDP-N-acetyl-alpha-D-glucosamine biosynthesis; N-acetyl-alpha-D-glucosamine 1-phosphate from alpha-D-glucosamine 6-phosphate (route II): step 2/2. It functions in the pathway nucleotide-sugar biosynthesis; UDP-N-acetyl-alpha-D-glucosamine biosynthesis; UDP-N-acetyl-alpha-D-glucosamine from N-acetyl-alpha-D-glucosamine 1-phosphate: step 1/1. It participates in bacterial outer membrane biogenesis; LPS lipid A biosynthesis. Functionally, catalyzes the last two sequential reactions in the de novo biosynthetic pathway for UDP-N-acetylglucosamine (UDP-GlcNAc). The C-terminal domain catalyzes the transfer of acetyl group from acetyl coenzyme A to glucosamine-1-phosphate (GlcN-1-P) to produce N-acetylglucosamine-1-phosphate (GlcNAc-1-P), which is converted into UDP-GlcNAc by the transfer of uridine 5-monophosphate (from uridine 5-triphosphate), a reaction catalyzed by the N-terminal domain. This chain is Bifunctional protein GlmU, found in Pelotomaculum thermopropionicum (strain DSM 13744 / JCM 10971 / SI).